A 148-amino-acid polypeptide reads, in one-letter code: Large ribosomal subunit protein uL22c (148 aa).

It belongs to the universal ribosomal protein uL22 family. Part of the 50S ribosomal subunit.

Its subcellular location is the plastid. It is found in the chloroplast. This protein binds specifically to 23S rRNA. In terms of biological role, the globular domain of the protein is located near the polypeptide exit tunnel on the outside of the subunit, while an extended beta-hairpin is found that lines the wall of the exit tunnel in the center of the 70S ribosome. This chain is Large ribosomal subunit protein uL22c (rpl22), found in Triticum aestivum (Wheat).